The sequence spans 1091 residues: ATP-dependent helicase/deoxyribonuclease subunit B (1091 aa).

Belongs to the helicase family. AddB/RexB type 2 subfamily. As to quaternary structure, heterodimer of AddA and RexB. The cofactor is Mg(2+).

The heterodimer acts as both an ATP-dependent DNA helicase and an ATP-dependent, dual-direction single-stranded exonuclease. Recognizes the chi site generating a DNA molecule suitable for the initiation of homologous recombination. This subunit has 5' -&gt; 3' nuclease activity but not helicase activity. In Streptococcus pneumoniae (strain CGSP14), this protein is ATP-dependent helicase/deoxyribonuclease subunit B.